Reading from the N-terminus, the 252-residue chain is Ribosomal RNA small subunit methyltransferase NEP1 (252 aa).

Residues L180, G207, 212-214, and 227-232 contribute to the S-adenosyl-L-methionine site; these read GKD and LSNYPL.

Belongs to the class IV-like SAM-binding methyltransferase superfamily. RNA methyltransferase NEP1 family. As to quaternary structure, homodimer. Interacts with snoRNA U3. Interacts with NOP14 and MPP10. Component of the ribosomal small subunit (SSU) processome composed of at least 40 protein subunits and snoRNA U3.

The protein localises to the nucleus. It localises to the nucleolus. The enzyme catalyses pseudouridine(1191) in yeast 18S rRNA + S-adenosyl-L-methionine = N(1)-methylpseudouridine(1191) in yeast 18S rRNA + S-adenosyl-L-homocysteine + H(+). Its function is as follows. S-adenosyl-L-methionine-dependent pseudouridine N(1)-methyltransferase that methylates pseudouridine at position 1189 (Psi1189) in 18S rRNA. Involved the biosynthesis of the hypermodified N1-methyl-N3-(3-amino-3-carboxypropyl) pseudouridine (m1acp3-Psi) conserved in eukaryotic 18S rRNA. N1-methylation is independent on acp-modification at the N3-position of U1191. Also has an essential role in 40S ribosomal subunit biogenesis independent on its methyltransferase activity, facilitating the incorporation of ribosomal protein S19 (RPS19A/RPS19B) during the formation of pre-ribosomes. The sequence is that of Ribosomal RNA small subunit methyltransferase NEP1 from Saccharomyces cerevisiae (strain ATCC 204508 / S288c) (Baker's yeast).